A 458-amino-acid polypeptide reads, in one-letter code: Translation initiation factor eIF2B subunit gamma (458 aa).

Ser-291 is modified (phosphoserine).

This sequence belongs to the eIF-2B gamma/epsilon subunits family. As to quaternary structure, component of the translation initiation factor 2B (eIF2B) complex which is a heterodecamer of two sets of five different subunits: alpha, beta, gamma, delta and epsilon. Subunits alpha, beta and delta comprise a regulatory subcomplex and subunits epsilon and gamma comprise a catalytic subcomplex. Within the complex, the hexameric regulatory complex resides at the center, with the two heterodimeric catalytic subcomplexes bound on opposite sides.

The protein localises to the cytoplasm. It localises to the cytosol. Its function is as follows. Acts as a component of the translation initiation factor 2B (eIF2B) complex, which catalyzes the exchange of GDP for GTP on the eukaryotic initiation factor 2 (eIF2) complex gamma subunit. Its guanine nucleotide exchange factor activity is repressed when bound to eIF2 complex phosphorylated on the alpha subunit, thereby limiting the amount of methionyl-initiator methionine tRNA available to the ribosome and consequently global translation is repressed. The polypeptide is Translation initiation factor eIF2B subunit gamma (tif223) (Schizosaccharomyces pombe (strain 972 / ATCC 24843) (Fission yeast)).